The chain runs to 491 residues: Tryptophan 5-hydroxylase 2 (491 aa).

Ser19 is modified (phosphoserine). The tract at residues 33–63 (NLTVNKSNSGKNDDKKGNKGSSRSETAPDSG) is disordered. The region spanning 66 to 141 (AVVFSLRNEV…TIVTLNPPEN (76 aa)) is the ACT domain. Residues His319, His324, and Glu364 each contribute to the Fe cation site.

It belongs to the biopterin-dependent aromatic amino acid hydroxylase family. In terms of assembly, interacts with DNAJC12. It depends on Fe(2+) as a cofactor.

It catalyses the reaction (6R)-L-erythro-5,6,7,8-tetrahydrobiopterin + L-tryptophan + O2 = 5-hydroxy-L-tryptophan + (4aS,6R)-4a-hydroxy-L-erythro-5,6,7,8-tetrahydrobiopterin. It functions in the pathway aromatic compound metabolism; serotonin biosynthesis; serotonin from L-tryptophan: step 1/2. The protein is Tryptophan 5-hydroxylase 2 (TPH2) of Equus caballus (Horse).